The following is a 528-amino-acid chain: Na(+)/H(+) antiporter NhaB (528 aa).

11 helical membrane-spanning segments follow: residues 23 to 45 (FAIL…VAGW), 66 to 86 (PGGL…SQVL), 95 to 115 (VLLL…LLLF), 139 to 159 (AFLS…AVAV), 203 to 223 (LLMH…VGEP), 241 to 261 (LRMS…CFLV), 310 to 330 (LIIG…SVII), 349 to 369 (EEAL…GVII), 390 to 410 (LVIF…VFVG), 448 to 468 (ATPN…APLI), and 476 to 496 (VWMA…AIQF).

Belongs to the NhaB Na(+)/H(+) (TC 2.A.34) antiporter family.

The protein resides in the cell inner membrane. It carries out the reaction 2 Na(+)(in) + 3 H(+)(out) = 2 Na(+)(out) + 3 H(+)(in). Functionally, na(+)/H(+) antiporter that extrudes sodium in exchange for external protons. This chain is Na(+)/H(+) antiporter NhaB, found in Shewanella piezotolerans (strain WP3 / JCM 13877).